The chain runs to 1331 residues: Disease resistance protein RUN1 (1331 aa).

A disordered region spans residues 1-20 (MASTSSSRASSSSSSSSTPS). One can recognise a TIR domain in the interval 25–190 (ITYDVFLSFR…EITDSIFRRL (166 aa)). NAD(+) is bound by residues 34 to 39 (RGEDTR) and Gly-66. The active site involves Glu-100. Residues 206–434 (SHVKEMIWRL…REPEAEILSV (229 aa)) form the NB-ARC domain. 20 LRR repeats span residues 429–452 (AEIL…IFLD), 480–509 (IKNL…GWEI), 540–565 (IKRV…AFAK), 616–638 (SYEL…NFDG), 648–673 (CSNI…SYSR), 684–708 (MPNL…VGNM), 709–732 (KKLT…IGDL), 734–756 (SLEI…GGNM), 757–779 (KSLT…IGDL), 781–803 (SLKY…GGNM), 804–826 (KSLR…IRDL), 828–850 (SLER…GGNM), 851–873 (KSLM…IGDL), 875–897 (SLKY…GGNM), 898–920 (KSLT…IGDL), 922–944 (SLVS…GGNM), 945–967 (KSLN…IGDL), 969–991 (SLMR…VGNM), 992–1014 (KSLE…IGDL), and 1017–1040 (LEKL…AIDA). Positions 1287 to 1291 (RKRRR) match the Nuclear localization signal motif.

It belongs to the disease resistance TIR-NB-LRR family.

It is found in the nucleus. Its subcellular location is the cytoplasm. The enzyme catalyses NAD(+) + H2O = ADP-D-ribose + nicotinamide + H(+). The catalysed reaction is NADP(+) + H2O = ADP-D-ribose 2'-phosphate + nicotinamide + H(+). Disease resistance (R) protein that confers resistance to multiple powdery and downy mildew by promoting cell death. Acts as a NAD(+) hydrolase (NADase): in response to activation, catalyzes cleavage of NAD(+) into ADP-D-ribose (ADPR) and nicotinamide; NAD(+) cleavage triggering a defense system that promotes cell death. Also able to hydrolyze NADP(+), but not other NAD(+)-related molecules. The protein is Disease resistance protein RUN1 of Vitis rotundifolia (Muscadine grape).